A 390-amino-acid chain; its full sequence is MFDFSKVVDRHGTWCTQWDYVADRFGTADLLPFTISDMDFATAPCIIEALNQRLMHGVFGYSRWKNDEFLAAIAHWFSTQHYTAIDSQTVVYGPSVIYMVSELIRQWSETGEGVVIHTPAYDAFYKAIEGNQRTVMPVALEKQADGWFCDMGKLEAVLAKPECKIMLLCSPQNPTGKVWTCDELEIMADLCERHGVRVISDEIHMDMVWGEQPHIPWSNVARGDWALLTSGSKSFNIPALTGAYGIIENSSSRDAYLSALKGRDGLSSPSVLALTAHIAAYQQGAPWLDALRIYLKDNLTYIADKMNAAFPELNWQIPQSTYLAWLDLRPLNIDDNALQKALIEQEKVAIMPGYTYGEEGRGFVRLNAGCPRSKLEKGVAGLINAIRAVR.

Position 233 is an N6-(pyridoxal phosphate)lysine (lysine 233).

It belongs to the class-II pyridoxal-phosphate-dependent aminotransferase family. MalY/PatB cystathionine beta-lyase subfamily. As to quaternary structure, homodimer. Interacts with MalT. It depends on pyridoxal 5'-phosphate as a cofactor.

It carries out the reaction L,L-cystathionine + H2O = L-homocysteine + pyruvate + NH4(+). It catalyses the reaction an S-substituted L-cysteine + H2O = a thiol + pyruvate + NH4(+). In terms of biological role, acts as a beta-cystathionase and as a repressor of the maltose regulon. The chain is Protein MalY (malY) from Escherichia coli (strain K12).